We begin with the raw amino-acid sequence, 295 residues long: Ribosomal protein L11 methyltransferase (295 aa).

S-adenosyl-L-methionine is bound by residues Thr-146, Gly-167, Asp-189, and Asn-231.

It belongs to the methyltransferase superfamily. PrmA family.

It localises to the cytoplasm. It catalyses the reaction L-lysyl-[protein] + 3 S-adenosyl-L-methionine = N(6),N(6),N(6)-trimethyl-L-lysyl-[protein] + 3 S-adenosyl-L-homocysteine + 3 H(+). In terms of biological role, methylates ribosomal protein L11. This Vibrio vulnificus (strain CMCP6) protein is Ribosomal protein L11 methyltransferase.